Reading from the N-terminus, the 161-residue chain is 2-C-methyl-D-erythritol 2,4-cyclodiphosphate synthase (161 aa).

A divalent metal cation contacts are provided by D10 and H12. 4-CDP-2-C-methyl-D-erythritol 2-phosphate-binding positions include 10-12 (DVH) and 36-37 (HS). H44 provides a ligand contact to a divalent metal cation. Residues 58-60 (DIG), 63-67 (FPDTD), 134-137 (TTTE), F141, and R144 each bind 4-CDP-2-C-methyl-D-erythritol 2-phosphate.

It belongs to the IspF family. As to quaternary structure, homotrimer. Requires a divalent metal cation as cofactor.

It catalyses the reaction 4-CDP-2-C-methyl-D-erythritol 2-phosphate = 2-C-methyl-D-erythritol 2,4-cyclic diphosphate + CMP. Its pathway is isoprenoid biosynthesis; isopentenyl diphosphate biosynthesis via DXP pathway; isopentenyl diphosphate from 1-deoxy-D-xylulose 5-phosphate: step 4/6. In terms of biological role, involved in the biosynthesis of isopentenyl diphosphate (IPP) and dimethylallyl diphosphate (DMAPP), two major building blocks of isoprenoid compounds. Catalyzes the conversion of 4-diphosphocytidyl-2-C-methyl-D-erythritol 2-phosphate (CDP-ME2P) to 2-C-methyl-D-erythritol 2,4-cyclodiphosphate (ME-CPP) with a corresponding release of cytidine 5-monophosphate (CMP). In Shewanella putrefaciens (strain CN-32 / ATCC BAA-453), this protein is 2-C-methyl-D-erythritol 2,4-cyclodiphosphate synthase.